We begin with the raw amino-acid sequence, 101 residues long: Gastrin (101 aa).

Residues 1 to 21 (MQRLCVYVLIFALALAAFSEA) form the signal peptide. A disordered region spans residues 22–82 (SWKPRSQQPD…SKKQGPWLEE (61 aa)). A Pyrrolidone carboxylic acid; in form big gastrin modification is found at Gln-59. Gln-76 is modified (pyrrolidone carboxylic acid; in form gastrin). Tyr-87 bears the Sulfotyrosine; partial mark. The residue at position 92 (Phe-92) is a Phenylalanine amide. Ser-96 carries the post-translational modification Phosphoserine. Positions 96–101 (SAEDEN) are cleaved as a propeptide — removed in mature form.

This sequence belongs to the gastrin/cholecystokinin family. Post-translationally, two different processing pathways probably exist in antral G-cells. In the dominant pathway progastrin is cleaved at three sites resulting in two major bioactive gastrins, gastrin-34 and gastrin-17. In the putative alternative pathway, progastrin may be processed only at the most C-terminal dibasic site resulting in the synthesis of gastrin-71. Sulfation enhances proteolytic processing, and blocks peptide degradation. Levels of sulfation differ between proteolytically-cleaved gastrins. Thus, gastrin-6 is almost 73% sulfated, whereas the larger gastrins are less than 50% sulfated. Sulfation levels are also tissue-specific.

It is found in the secreted. Its function is as follows. Gastrin stimulates the stomach mucosa to produce and secrete hydrochloric acid and the pancreas to secrete its digestive enzymes. It also stimulates smooth muscle contraction and increases blood circulation and water secretion in the stomach and intestine. This is Gastrin (GAST) from Homo sapiens (Human).